Reading from the N-terminus, the 521-residue chain is Glutamate--tRNA ligase (521 aa).

Residues Pro-13–Gly-23 carry the 'HIGH' region motif. A 'KMSKS' region motif is present at residues Lys-253–Arg-257. Lys-256 contacts ATP.

It belongs to the class-I aminoacyl-tRNA synthetase family. Glutamate--tRNA ligase type 1 subfamily. In terms of assembly, monomer.

Its subcellular location is the cytoplasm. The enzyme catalyses tRNA(Glu) + L-glutamate + ATP = L-glutamyl-tRNA(Glu) + AMP + diphosphate. Functionally, catalyzes the attachment of glutamate to tRNA(Glu) in a two-step reaction: glutamate is first activated by ATP to form Glu-AMP and then transferred to the acceptor end of tRNA(Glu). This chain is Glutamate--tRNA ligase, found in Leptospira interrogans serogroup Icterohaemorrhagiae serovar copenhageni (strain Fiocruz L1-130).